We begin with the raw amino-acid sequence, 419 residues long: 4-hydroxyphenylpyruvate dioxygenase (419 aa).

VOC domains lie at 41–187 (GYHH…FIQR) and 218–376 (AIDH…LFTK). Residues His221, His304, and Glu387 each contribute to the Fe cation site.

Belongs to the 4HPPD family. Fe cation is required as a cofactor.

The enzyme catalyses 3-(4-hydroxyphenyl)pyruvate + O2 = homogentisate + CO2. Its pathway is amino-acid degradation; L-phenylalanine degradation; acetoacetate and fumarate from L-phenylalanine: step 3/6. This is 4-hydroxyphenylpyruvate dioxygenase (HPPD) from Zymoseptoria tritici (Speckled leaf blotch fungus).